We begin with the raw amino-acid sequence, 477 residues long: Cysteine--tRNA ligase (477 aa).

Cysteine 29 contacts Zn(2+). Residues proline 31–asparagine 41 carry the 'HIGH' region motif. Zn(2+) contacts are provided by cysteine 224, histidine 249, and glutamate 253. The 'KMSKS' region signature appears at lysine 282 to serine 286. Lysine 285 is an ATP binding site.

It belongs to the class-I aminoacyl-tRNA synthetase family. In terms of assembly, monomer. It depends on Zn(2+) as a cofactor.

The protein localises to the cytoplasm. The enzyme catalyses tRNA(Cys) + L-cysteine + ATP = L-cysteinyl-tRNA(Cys) + AMP + diphosphate. This Nitrobacter winogradskyi (strain ATCC 25391 / DSM 10237 / CIP 104748 / NCIMB 11846 / Nb-255) protein is Cysteine--tRNA ligase.